A 118-amino-acid polypeptide reads, in one-letter code: uncharacterized protein (118 aa).

Residues 1–18 (MSKLIFLFVVATLATIKA) form the signal peptide. N-linked (GlcNAc...) asparagine; by host glycosylation occurs at Asn-24.

This is an uncharacterized protein from Magallana gigas (Pacific oyster).